We begin with the raw amino-acid sequence, 52 residues long: Large ribosomal subunit protein bL32c (52 aa).

The protein belongs to the bacterial ribosomal protein bL32 family.

It is found in the plastid. The protein resides in the chloroplast. The polypeptide is Large ribosomal subunit protein bL32c (Aethionema grandiflorum (Persian stone-cress)).